The primary structure comprises 231 residues: Octanoyltransferase (231 aa).

A BPL/LPL catalytic domain is found at 49 to 231; sequence SEAAEQVWLL…KRTFSEVFGS (183 aa). Substrate-binding positions include 87–94, 162–164, and 175–177; these read RGGQITYH, AIG, and GVS. The Acyl-thioester intermediate role is filled by cysteine 193.

This sequence belongs to the LipB family.

Its subcellular location is the cytoplasm. The catalysed reaction is octanoyl-[ACP] + L-lysyl-[protein] = N(6)-octanoyl-L-lysyl-[protein] + holo-[ACP] + H(+). Its pathway is protein modification; protein lipoylation via endogenous pathway; protein N(6)-(lipoyl)lysine from octanoyl-[acyl-carrier-protein]: step 1/2. Catalyzes the transfer of endogenously produced octanoic acid from octanoyl-acyl-carrier-protein onto the lipoyl domains of lipoate-dependent enzymes. Lipoyl-ACP can also act as a substrate although octanoyl-ACP is likely to be the physiological substrate. This Nitrobacter winogradskyi (strain ATCC 25391 / DSM 10237 / CIP 104748 / NCIMB 11846 / Nb-255) protein is Octanoyltransferase.